The sequence spans 456 residues: uncharacterized protein (456 aa).

Composition is skewed to basic and acidic residues over residues 181–210 and 217–231; these read DQRK…DKKV and KEIE…ENEE. Residues 181-231 are disordered; sequence DQRKESIVNDERKKNPEFREKPDKNEDKKVKPPPSLKEIENKGIDHEENEE. Residues 216–248 are a coiled coil; that stretch reads LKEIENKGIDHEENEEDKKRELMFKLQLLQKQY. Residues 347-365 traverse the membrane as a helical segment; that stretch reads LALAILFNAVWFIAAKMIM. Residues 383-407 are compositionally biased toward polar residues; that stretch reads NKSGTTPNSVSPRTWGNSKSPQSEF. The segment at 383–456 is disordered; that stretch reads NKSGTTPNSV…MREQGIETLK (74 aa). Basic and acidic residues predominate over residues 441 to 456; that stretch reads DESRREMREQGIETLK.

Belongs to the IIV-6 067R family.

The protein resides in the membrane. This is an uncharacterized protein from Invertebrate iridescent virus 6 (IIV-6).